The following is a 258-amino-acid chain: Thiazole synthase (258 aa).

The active-site Schiff-base intermediate with DXP is lysine 100. Residues glycine 161, 187 to 188 (AG), and 209 to 210 (NT) contribute to the 1-deoxy-D-xylulose 5-phosphate site.

It belongs to the ThiG family. Homotetramer. Forms heterodimers with either ThiH or ThiS.

Its subcellular location is the cytoplasm. It carries out the reaction [ThiS sulfur-carrier protein]-C-terminal-Gly-aminoethanethioate + 2-iminoacetate + 1-deoxy-D-xylulose 5-phosphate = [ThiS sulfur-carrier protein]-C-terminal Gly-Gly + 2-[(2R,5Z)-2-carboxy-4-methylthiazol-5(2H)-ylidene]ethyl phosphate + 2 H2O + H(+). It functions in the pathway cofactor biosynthesis; thiamine diphosphate biosynthesis. In terms of biological role, catalyzes the rearrangement of 1-deoxy-D-xylulose 5-phosphate (DXP) to produce the thiazole phosphate moiety of thiamine. Sulfur is provided by the thiocarboxylate moiety of the carrier protein ThiS. In vitro, sulfur can be provided by H(2)S. This chain is Thiazole synthase, found in Campylobacter jejuni subsp. jejuni serotype O:6 (strain 81116 / NCTC 11828).